The sequence spans 309 residues: Pyrroline-5-carboxylate reductase 1, mitochondrial (309 aa).

Serine 2 bears the N-acetylserine mark. NADP(+)-binding positions include 6–11 (IGAGQL) and serine 34. The NADPH site is built by alanine 8, glutamine 10, leucine 11, serine 34, aspartate 36, asparagine 56, valine 70, lysine 71, and alanine 97. Residues asparagine 56, 69–72 (AVKP), and 95–97 (CAA) each bind NADP(+). Glutamate 164 lines the L-proline pocket. Position 230 (asparagine 230) interacts with NADPH. Residues alanine 237 and threonine 238 each contribute to the L-proline site. A phosphoserine mark is found at serine 278 and serine 301.

It belongs to the pyrroline-5-carboxylate reductase family. Homodecamer; composed of 5 homodimers. Interacts with LTO1. In terms of tissue distribution, highly expressed in osteoblasts and skin.

Its subcellular location is the mitochondrion. It catalyses the reaction L-proline + NADP(+) = (S)-1-pyrroline-5-carboxylate + NADPH + 2 H(+). The catalysed reaction is L-proline + NAD(+) = (S)-1-pyrroline-5-carboxylate + NADH + 2 H(+). The protein operates within amino-acid biosynthesis; L-proline biosynthesis; L-proline from L-glutamate 5-semialdehyde: step 1/1. Oxidoreductase that catalyzes the last step in proline biosynthesis, which corresponds to the reduction of pyrroline-5-carboxylate to L-proline using NAD(P)H. At physiologic concentrations, has higher specific activity in the presence of NADH. Involved in the cellular response to oxidative stress. In Mus musculus (Mouse), this protein is Pyrroline-5-carboxylate reductase 1, mitochondrial.